The chain runs to 252 residues: MVFLKKLIKLKNNLKEKFKNKKIIIAYSGGIDSLLLSILLSEITETLCIFIKTPYISEWSLNNAIINAKKYNLNLKVIKIDKIIKNVPERCYLCKKMFFEILTKEKEKYNYDVVVDGTNYDDLFEDRPGLRAKEEFNIGSPFADFKIGKKDILEIAKELNINIPPKETCLLTRFEFNREISIEDLKKIEELEEFLRNYVKGAIRVRDYKNLAVIEIEDDLSKIINEKEEIIKKFKDYGFKKVCINLEIYRSY.

It belongs to the LarE family.

This is an uncharacterized protein from Methanocaldococcus jannaschii (strain ATCC 43067 / DSM 2661 / JAL-1 / JCM 10045 / NBRC 100440) (Methanococcus jannaschii).